A 200-amino-acid chain; its full sequence is dTTP/UTP pyrophosphatase (200 aa).

Asp-81 functions as the Proton acceptor in the catalytic mechanism.

The protein belongs to the Maf family. YhdE subfamily. A divalent metal cation is required as a cofactor.

Its subcellular location is the cytoplasm. The catalysed reaction is dTTP + H2O = dTMP + diphosphate + H(+). It carries out the reaction UTP + H2O = UMP + diphosphate + H(+). Nucleoside triphosphate pyrophosphatase that hydrolyzes dTTP and UTP. May have a dual role in cell division arrest and in preventing the incorporation of modified nucleotides into cellular nucleic acids. In Albidiferax ferrireducens (strain ATCC BAA-621 / DSM 15236 / T118) (Rhodoferax ferrireducens), this protein is dTTP/UTP pyrophosphatase.